Consider the following 143-residue polypeptide: Probable FAD-linked sulfhydryl oxidase R368 (143 aa).

The region spanning 10-104 is the ERV/ALR sulfhydryl oxidase domain; the sequence is GWTFSHAVAL…YPEAIEAIEK (95 aa). A disulfide bridge links C46 with C49. A helical transmembrane segment spans residues 117–137; sequence FFIILIIIGIIVIIYLMYIVF.

It depends on FAD as a cofactor.

It localises to the membrane. The catalysed reaction is 2 R'C(R)SH + O2 = R'C(R)S-S(R)CR' + H2O2. In terms of biological role, FAD-dependent sulfhydryl oxidase that catalyzes disulfide bond formation. This is Probable FAD-linked sulfhydryl oxidase R368 from Acanthamoeba polyphaga mimivirus (APMV).